A 522-amino-acid polypeptide reads, in one-letter code: Target of rapamycin complex 2 subunit MAPKAP1 (522 aa).

At alanine 2 the chain carries N-acetylalanine. An interaction with MAP3K2 region spans residues 2–184 (AFLDNPTIIL…KKIDVYLPLH (183 aa)). Residues 2-267 (AFLDNPTIIL…GFSTLALVEK (266 aa)) are interaction with NBN. Threonine 86 carries the phosphothreonine modification. 4 positions are modified to phosphoserine: serine 128, serine 186, serine 315, and serine 356. In terms of domain architecture, CRIM spans 139–267 (QSILSVRLEQ…GFSTLALVEK (129 aa)). Residues 279–353 (LFVRINAAHG…QSAWEFCLVR (75 aa)) are SIN1-type RBD. In terms of domain architecture, SIN1-type PH spans 382-487 (HYKSFKVSMI…IVLKVNYILE (106 aa)). Arginine 393 lines the a 1,2-diacyl-sn-glycero-3-phospho-(1D-myo-inositol-3,4,5-trisphosphate) pocket. Threonine 398 bears the Phosphothreonine mark. Residues lysine 428 and lysine 464 each coordinate a 1,2-diacyl-sn-glycero-3-phospho-(1D-myo-inositol-3,4,5-trisphosphate). Residues 468–522 (FESDAATVNEIVLKVNYILESRASTARADYFAQKQRKLNRRTSFSFQKEKKSGQQ) are interaction with ATF2. A Phosphoserine modification is found at serine 510.

Belongs to the SIN1 family. Component of the mechanistic target of rapamycin complex 2 (mTORC2), consisting in two heterotretramers composed of MTOR, MLST8, RICTOR and MAPKAP1/SIN1. The mTORC2 core complex associates with PRR5/PROTOR1 and/or PRR5L/PROTOR2. Contrary to mTORC1, mTORC2 does not bind to and is not sensitive to FKBP12-rapamycin. Interacts with MAP3K2. Interacts with ATF2. Interacts with MAPK8. Interacts with GTP-bound HRAS and KRAS; inhibiting their activity. Interacts with IFNAR2. In terms of processing, phosphorylation at Ser-128 by PKC promotes relocalization to the perinuclear region, where the mTORC2 complex specifically mediates phosphorylation of SGK1. Phosphorylated at Thr-86 by AKT1 or RPS6KB1 in the presence of growth factors; the effect of this phosphorylation is however unclear. According to two studies, phosphorylation at Thr-86 by AKT1 is part of a positive feedback loop that increases mTORC2 activation. According to another study, phosphorylation at Thr-86 and Thr-398 by RPS6KB1 promotes dissociation from the mTORC2 complex, leading to inhibit mTORC2 signaling.

Its subcellular location is the cell membrane. The protein resides in the endoplasmic reticulum membrane. It localises to the early endosome membrane. The protein localises to the late endosome membrane. It is found in the lysosome membrane. Its subcellular location is the golgi apparatus membrane. The protein resides in the mitochondrion outer membrane. It localises to the cytoplasm. The protein localises to the perinuclear region. It is found in the nucleus. With respect to regulation, phosphatidylinositol 3,4,5-trisphosphate (PI(3,4,5)P3) promotes MTOR activation by relieving MAPKAP1/SIN1-mediated inhibition of MTOR that takes place in absence of PI(3,4,5)P3. In terms of biological role, component of the mechanistic target of rapamycin complex 2 (mTORC2), which transduces signals from growth factors to pathways involved in proliferation, cytoskeletal organization, lipogenesis and anabolic output. In response to growth factors, mTORC2 phosphorylates and activates AGC protein kinase family members, including AKT (AKT1, AKT2 and AKT3), PKC (PRKCA, PRKCB and PRKCE) and SGK1. In contrast to mTORC1, mTORC2 is nutrient-insensitive. Within the mTORC2 complex, MAPKAP1/SIN1 acts as a substrate adapter which recognizes and binds AGC protein kinase family members for phosphorylation by MTOR. mTORC2 plays a critical role in AKT1 activation by mediating phosphorylation of different sites depending on the context, such as 'Thr-450', 'Ser-473', 'Ser-477' or 'Thr-479', facilitating the phosphorylation of the activation loop of AKT1 on 'Thr-308' by PDPK1/PDK1 which is a prerequisite for full activation. mTORC2 catalyzes the phosphorylation of SGK1 at 'Ser-422' and of PRKCA on 'Ser-657'. The mTORC2 complex also phosphorylates various proteins involved in insulin signaling, such as FBXW8 and IGF2BP1. mTORC2 acts upstream of Rho GTPases to regulate the actin cytoskeleton, probably by activating one or more Rho-type guanine nucleotide exchange factors. mTORC2 promotes the serum-induced formation of stress-fibers or F-actin. MAPKAP1 inhibits MAP3K2 by preventing its dimerization and autophosphorylation. Inhibits HRAS and KRAS independently of mTORC2 complex. Enhances osmotic stress-induced phosphorylation of ATF2 and ATF2-mediated transcription. Involved in ciliogenesis, regulates cilia length through its interaction with CCDC28B independently of mTORC2 complex. In Bos taurus (Bovine), this protein is Target of rapamycin complex 2 subunit MAPKAP1 (MAPKAP1).